We begin with the raw amino-acid sequence, 726 residues long: Pyrroloquinoline quinone-dependent pyranose dehydrogenase (726 aa).

An N-terminal signal peptide occupies residues 1-18; it reads MRSSSLAWALGLVALANA. Positions 83 and 108 each coordinate heme b. Residues Cys-138 and Cys-141 are joined by a disulfide bond. N-linked (GlcNAc...) asparagine glycosylation occurs at Asn-140. Heme b contacts are provided by Arg-181 and His-182. The interval 211 to 242 is disordered; it reads PPLSGGAPTQPPTQQPPTTTAPPPPPPSSTFV. Residues 219-238 show a composition bias toward pro residues; the sequence is TQPPTQQPPTTTAPPPPPPS. Cys-244 and Cys-302 are oxidised to a cystine. Positions 273, 363, 430, and 431 each coordinate pyrroloquinoline quinone. Ser-449 and Asp-451 together coordinate Ca(2+). A disulfide bond links Cys-492 and Cys-525. His-539 serves as a coordination point for pyrroloquinoline quinone. Asn-551 is a glycosylation site (N-linked (GlcNAc...) asparagine). Residues His-560, Trp-563, and Asn-564 each contribute to the pyrroloquinoline quinone site. Cys-611 and Cys-619 form a disulfide bridge. Residue Arg-621 coordinates pyrroloquinoline quinone. The segment covering 659–678 has biased composition (pro residues); it reads ITQPPITTSPPTPTTPPVVQ. The interval 659–689 is disordered; sequence ITQPPITTSPPTPTTPPVVQPPTTVAPPQAS. The span at 679–689 shows a compositional bias: low complexity; sequence PPTTVAPPQAS. A CBM1 domain is found at 688–724; it reads ASQTLWGQCGGQGWTGPTLCPANSVCRESNQWYSQCV.

It belongs to the sugar dehydrogenase AA12 family. Requires Ca(2+) as cofactor. It depends on pyrroloquinoline quinone as a cofactor. Heme b serves as cofactor.

The protein localises to the secreted. Pyrroloquinoline quinone (PPQ)-dependent oxidoreductase that catalyzes the oxidation of various sugars including L-galactose, L-gulose, D-talose, D-arabinose, D-lyxose, L-fucose and D-glucosone. Shows significant activity toward the reverse-chair conformation of pyranoses. Shows little or no activity toward abundant sugars such as D-glucose, D-fructose, cellobiose, as well L-xylose and L-glucose. This enzyme is able to direct electrical communication with electrodes, without artificial electron mediators, thus allowing direct electron transfer (DET)-type bioelectrocatalysis. Exhibits binding affinity for insoluble cellulose. PDH does not oxidize cello-oligosaccharides but is able to activate the C-1-oxidizing Neurospora crassa LPMO9F and the C-4-oxidizing Neurospora crassa LPMO9C thanks to the electron-tranfer activity of the cytochrome domain and the localization of PDH in the vicinity of the LPMO substrates by the CBM1 domain. The sequence is that of Pyrroloquinoline quinone-dependent pyranose dehydrogenase from Coprinopsis cinerea (strain Okayama-7 / 130 / ATCC MYA-4618 / FGSC 9003) (Inky cap fungus).